Consider the following 204-residue polypeptide: B9 domain-containing protein 1 (204 aa).

Positions 9–127 (FLLMVNGQVE…TIPMFVPEST (119 aa)) constitute a C2 B9-type domain. A disordered region spans residues 182–204 (GYDTGPSDTQGVLGPSPPQSFPQ).

It belongs to the B9D family. As to quaternary structure, part of the tectonic-like complex (also named B9 complex).

It localises to the cytoplasm. The protein localises to the cytoskeleton. It is found in the cilium basal body. Its subcellular location is the cilium axoneme. Functionally, component of the tectonic-like complex, a complex localized at the transition zone of primary cilia and acting as a barrier that prevents diffusion of transmembrane proteins between the cilia and plasma membranes. Required for ciliogenesis and sonic hedgehog/SHH signaling. This is B9 domain-containing protein 1 (B9D1) from Homo sapiens (Human).